The primary structure comprises 928 residues: DNA polymerase I (928 aa).

Positions 1-323 (MVQIPENPLI…IDESPSEPAA (323 aa)) constitute a 5'-3' exonuclease domain. The 3'-5' exonuclease domain maps to 324–517 (ALSYENYVTI…LHLKMWPELQ (194 aa)). The interval 324–928 (ALSYENYVTI…GSGENWDQAH (605 aa)) is klenow fragment. Residues 521 to 928 (GPLNVFENIE…GSGENWDQAH (408 aa)) are polymerase.

The protein belongs to the DNA polymerase type-A family. In terms of assembly, single-chain monomer with multiple functions.

The catalysed reaction is DNA(n) + a 2'-deoxyribonucleoside 5'-triphosphate = DNA(n+1) + diphosphate. In terms of biological role, in addition to polymerase activity, this DNA polymerase exhibits 3'-5' and 5'-3' exonuclease activity. It is able to utilize nicked circular duplex DNA as a template and can unwind the parental DNA strand from its template. The chain is DNA polymerase I (polA) from Salmonella typhimurium (strain LT2 / SGSC1412 / ATCC 700720).